Consider the following 103-residue polypeptide: DPVAPTVLIFPPAADQVATGTVTIVCVANKYFPDVTVTWEVDGTTQTTGIENSKTPQNSADCTYNLSSTLTLTSTQYNSHKEYTCKVTQGTTSVVQSFNRGDC.

In terms of domain architecture, Ig-like spans 5-95; the sequence is PTVLIFPPAA…KVTQGTTSVV (91 aa). Cys26 and Cys85 are joined by a disulfide.

In Oryctolagus cuniculus (Rabbit), this protein is Ig kappa-b4 chain C region.